The following is a 428-amino-acid chain: Probable methanogen homoaconitase large subunit (428 aa).

[4Fe-4S] cluster-binding residues include C304, C364, and C367.

This sequence belongs to the aconitase/IPM isomerase family. LeuC type 2 subfamily. Heterotetramer of 2 HacA and 2 HacB proteins.

The enzyme catalyses (2R)-homocitrate = (2R,3S)-homoisocitrate. The catalysed reaction is (2R)-homocitrate = cis-homoaconitate + H2O. It catalyses the reaction (2R,3S)-homoisocitrate = cis-homoaconitate + H2O. It carries out the reaction cis-(homo)2aconitate + H2O = (2R,3S)-iso(homo)2citrate. The enzyme catalyses cis-(homo)3aconitate + H2O = (2R,3S)-iso(homo)3citrate. It participates in organic acid metabolism; 2-oxosuberate biosynthesis. Its function is as follows. Component of a hydro-lyase with broad substrate specificity for cis-unsaturated tricarboxylic acids. Catalyzes both the reversible dehydration of (R)-homocitrate ((R)-2-hydroxybutane-1,2,4-tricarboxylate) to produce cis-homoaconitate ((Z)-but-1-ene-1,2,4-tricarboxylate), and its hydration to homoisocitrate ((1R,2S)-1-hydroxybutane-1,2,4-tricarboxylate). Is also able to hydrate the analogous longer chain substrates cis-homo(2)-aconitate, cis-homo(3)-aconitate. These reactions are part of the biosynthesis pathway of coenzyme B. The protein is Probable methanogen homoaconitase large subunit (hacA) of Methanothermobacter thermautotrophicus (strain ATCC 29096 / DSM 1053 / JCM 10044 / NBRC 100330 / Delta H) (Methanobacterium thermoautotrophicum).